The sequence spans 396 residues: Acetylornithine aminotransferase 2 (396 aa).

Pyridoxal 5'-phosphate contacts are provided by residues 102 to 103 and phenylalanine 134; that span reads GA. N(2)-acetyl-L-ornithine is bound at residue arginine 137. 219 to 222 serves as a coordination point for pyridoxal 5'-phosphate; the sequence is DEVQ. An N6-(pyridoxal phosphate)lysine modification is found at lysine 248. Threonine 276 contributes to the pyridoxal 5'-phosphate binding site.

The protein belongs to the class-III pyridoxal-phosphate-dependent aminotransferase family. ArgD subfamily. Homodimer. It depends on pyridoxal 5'-phosphate as a cofactor.

The protein resides in the cytoplasm. It carries out the reaction N(2)-acetyl-L-ornithine + 2-oxoglutarate = N-acetyl-L-glutamate 5-semialdehyde + L-glutamate. The protein operates within amino-acid biosynthesis; L-arginine biosynthesis; N(2)-acetyl-L-ornithine from L-glutamate: step 4/4. In Bordetella pertussis (strain Tohama I / ATCC BAA-589 / NCTC 13251), this protein is Acetylornithine aminotransferase 2.